The primary structure comprises 210 residues: High-affinity nitrate transporter 3.1 (210 aa).

Positions methionine 1–glycine 22 are cleaved as a signal peptide. Residues leucine 178–valine 198 traverse the membrane as a helical segment.

This sequence belongs to the NAR2 family. In terms of assembly, heterotetramer composed of two NRT2.1 and two NRT3.1. Interacts with NRT2.1 and NRT2.3. Interacts with all other NRT2 transporters, including NRT2.5. In terms of tissue distribution, highly expressed in roots. Detected in shoots.

The protein localises to the cell membrane. Acts as a dual component transporter with NTR2.1. Required for high-affinity nitrate transport. Acts as a repressor of lateral root initiation. May be involved in targeting NRT2 proteins to the plasma membrane. In Arabidopsis thaliana (Mouse-ear cress), this protein is High-affinity nitrate transporter 3.1 (NRT3.1).